Here is a 366-residue protein sequence, read N- to C-terminus: Histidinol-phosphate aminotransferase (366 aa).

K222 carries the post-translational modification N6-(pyridoxal phosphate)lysine.

The protein belongs to the class-II pyridoxal-phosphate-dependent aminotransferase family. Histidinol-phosphate aminotransferase subfamily. As to quaternary structure, homodimer. The cofactor is pyridoxal 5'-phosphate.

It carries out the reaction L-histidinol phosphate + 2-oxoglutarate = 3-(imidazol-4-yl)-2-oxopropyl phosphate + L-glutamate. The protein operates within amino-acid biosynthesis; L-histidine biosynthesis; L-histidine from 5-phospho-alpha-D-ribose 1-diphosphate: step 7/9. The protein is Histidinol-phosphate aminotransferase of Lysinibacillus sphaericus (strain C3-41).